The primary structure comprises 379 residues: 1-deoxy-D-xylulose 5-phosphate reductoisomerase (379 aa).

7 residues coordinate NADPH: threonine 10, glycine 11, serine 12, isoleucine 13, arginine 38, asparagine 39, and asparagine 121. Lysine 122 lines the 1-deoxy-D-xylulose 5-phosphate pocket. Glutamate 123 serves as a coordination point for NADPH. Aspartate 147 is a Mn(2+) binding site. The 1-deoxy-D-xylulose 5-phosphate site is built by serine 148, glutamate 149, serine 173, and histidine 196. Glutamate 149 is a binding site for Mn(2+). Residue glycine 202 coordinates NADPH. 1-deoxy-D-xylulose 5-phosphate-binding residues include serine 209, asparagine 214, lysine 215, and glutamate 218. Glutamate 218 is a binding site for Mn(2+).

It belongs to the DXR family. The cofactor is Mg(2+). Mn(2+) is required as a cofactor.

It carries out the reaction 2-C-methyl-D-erythritol 4-phosphate + NADP(+) = 1-deoxy-D-xylulose 5-phosphate + NADPH + H(+). The protein operates within isoprenoid biosynthesis; isopentenyl diphosphate biosynthesis via DXP pathway; isopentenyl diphosphate from 1-deoxy-D-xylulose 5-phosphate: step 1/6. Catalyzes the NADPH-dependent rearrangement and reduction of 1-deoxy-D-xylulose-5-phosphate (DXP) to 2-C-methyl-D-erythritol 4-phosphate (MEP). The protein is 1-deoxy-D-xylulose 5-phosphate reductoisomerase of Chlamydia trachomatis serovar A (strain ATCC VR-571B / DSM 19440 / HAR-13).